Consider the following 349-residue polypeptide: Green-sensitive opsin-1 (349 aa).

Over 1–36 the chain is Extracellular; that stretch reads MNGTEGKNFYVPMSNRTGLVRSPFEYPQYYLAEPWQ. Residues Asn-2 and Asn-15 are each glycosylated (N-linked (GlcNAc...) asparagine). The helical transmembrane segment at 37–61 threads the bilayer; it reads FKILALYLFFLMSMGLPINGLTLVV. At 62–73 the chain is on the cytoplasmic side; the sequence is TAQHKKLRQPLN. A helical membrane pass occupies residues 74-99; sequence FILVNLAVAGTIMVCFGFTVTFYTAI. Topologically, residues 100–113 are extracellular; sequence NGYFVLGPTGCAVE. A disulfide bridge links Cys-110 with Cys-187. The chain crosses the membrane as a helical span at residues 114 to 133; the sequence is GFMATLGGEVALWSLVVLAI. At 134 to 152 the chain is on the cytoplasmic side; sequence ERYIVVCKPMGSFKFSSSH. The helical transmembrane segment at 153 to 176 threads the bilayer; it reads AFAGIAFTWVMALACAAPPLFGWS. At 177 to 202 the chain is on the extracellular side; it reads RYIPEGMQCSCGPDYYTLNPDYNNES. A helical transmembrane segment spans residues 203–230; sequence YVIYMFVCHFILPVAVIFFTYGRLVCTV. At 231–252 the chain is on the cytoplasmic side; sequence KAAAAQQQDSASTQKAEREVTK. A helical membrane pass occupies residues 253–276; it reads MVILMVFGFLIAWTPYATVAAWIF. Residues 277–284 are Extracellular-facing; the sequence is FNKGADFS. The chain crosses the membrane as a helical span at residues 285–309; it reads AKFMAIPAFFSKSSALYNPVIYVLL. Position 296 is an N6-(retinylidene)lysine (Lys-296). At 310–349 the chain is on the cytoplasmic side; it reads NKQFRNCMLTTIFCGKNPLGDDESSTVSTSKTEVSSVSPA. The segment at 329 to 349 is disordered; that stretch reads GDDESSTVSTSKTEVSSVSPA. The span at 334-349 shows a compositional bias: low complexity; sequence STVSTSKTEVSSVSPA.

It belongs to the G-protein coupled receptor 1 family. Opsin subfamily. In terms of processing, phosphorylated on some or all of the serine and threonine residues present in the C-terminal region. In terms of tissue distribution, the color pigments are found in the cone photoreceptor cells.

It is found in the membrane. Functionally, visual pigments are the light-absorbing molecules that mediate vision. They consist of an apoprotein, opsin, covalently linked to cis-retinal. This is Green-sensitive opsin-1 from Carassius auratus (Goldfish).